Consider the following 183-residue polypeptide: Large ribosomal subunit protein uL6 (183 aa).

This sequence belongs to the universal ribosomal protein uL6 family. Part of the 50S ribosomal subunit.

Its function is as follows. This protein binds to the 23S rRNA, and is important in its secondary structure. It is located near the subunit interface in the base of the L7/L12 stalk, and near the tRNA binding site of the peptidyltransferase center. This chain is Large ribosomal subunit protein uL6, found in Chlamydia pneumoniae (Chlamydophila pneumoniae).